A 439-amino-acid chain; its full sequence is Ornithine aminotransferase, mitochondrial (439 aa).

The transit peptide at 1 to 25 directs the protein to the mitochondrion; in hepatic form; that stretch reads MFSKLAHLQRFAVLSRGVHSSVASA. The N-terminal 35 residues, 1-35, are a transit peptide targeting the mitochondrion; in renal form; sequence MFSKLAHLQRFAVLSRGVHSSVASATSVATKKTVQ. N6-acetyllysine occurs at positions 49 and 66. At Lys102 the chain carries N6-succinyllysine. Lys107 carries the N6-acetyllysine; alternate modification. Residue Lys107 is modified to N6-succinyllysine; alternate. Position 292 is an N6-(pyridoxal phosphate)lysine (Lys292). The residue at position 362 (Lys362) is an N6-acetyllysine; alternate. Lys362 carries the post-translational modification N6-succinyllysine; alternate. An N6-acetyllysine mark is found at Lys386 and Lys392. An N6-acetyllysine; alternate modification is found at Lys405. An N6-succinyllysine; alternate modification is found at Lys405. At Lys421 the chain carries N6-acetyllysine.

This sequence belongs to the class-III pyridoxal-phosphate-dependent aminotransferase family. As to quaternary structure, homohexamer. Pyridoxal 5'-phosphate serves as cofactor.

Its subcellular location is the mitochondrion matrix. It catalyses the reaction L-ornithine + 2-oxoglutarate = L-glutamate 5-semialdehyde + L-glutamate. Its pathway is amino-acid biosynthesis; L-proline biosynthesis; L-glutamate 5-semialdehyde from L-ornithine: step 1/1. Catalyzes the reversible interconversion of L-ornithine and 2-oxoglutarate to L-glutamate semialdehyde and L-glutamate. This Homo sapiens (Human) protein is Ornithine aminotransferase, mitochondrial (OAT).